A 356-amino-acid polypeptide reads, in one-letter code: MTIQTDDFDMSDLPPARRMLSAAPASPKEEAIERALRPKLFDDYVGQTKAREQLEIFIGAANKRQEALDHVLLFGPPGLGKTTLSHIIAHELGVNMRSTSGPVLEKPKDLAALLTNLEKNDVLFIDEIHRLSPVVEEILYPALEDYQIDIMIGEGPAARSIKLDLQPFTLVGATTRAGMLTNPLRDRFGIVARLEFYTPEELARIVKRSAGLLNAPMDAEGGFEIARRSRGTPRIANRLLRRVRDYADVKGNGTITLDIANRALAMLDVDPQGFDLMDRKFLEAVILRFDGGPVGLDNIAASIGEESGTIEDVIEPYLIQQGFLQRTPRGRIATLAAYRHLGVAPPRGNAENLFEE.

A large ATPase domain (RuvB-L) region spans residues 13 to 197; that stretch reads LPPARRMLSA…FGIVARLEFY (185 aa). Residues Leu36, Arg37, Gly78, Lys81, Thr82, Thr83, 144-146, Arg187, Tyr197, and Arg234 each bind ATP; that span reads EDY. Mg(2+) is bound at residue Thr82. The tract at residues 198–268 is small ATPAse domain (RuvB-S); it reads TPEELARIVK…IANRALAMLD (71 aa). The tract at residues 271-356 is head domain (RuvB-H); that stretch reads PQGFDLMDRK…RGNAENLFEE (86 aa). 2 residues coordinate DNA: Arg326 and Arg331.

This sequence belongs to the RuvB family. In terms of assembly, homohexamer. Forms an RuvA(8)-RuvB(12)-Holliday junction (HJ) complex. HJ DNA is sandwiched between 2 RuvA tetramers; dsDNA enters through RuvA and exits via RuvB. An RuvB hexamer assembles on each DNA strand where it exits the tetramer. Each RuvB hexamer is contacted by two RuvA subunits (via domain III) on 2 adjacent RuvB subunits; this complex drives branch migration. In the full resolvosome a probable DNA-RuvA(4)-RuvB(12)-RuvC(2) complex forms which resolves the HJ.

It localises to the cytoplasm. It catalyses the reaction ATP + H2O = ADP + phosphate + H(+). The RuvA-RuvB-RuvC complex processes Holliday junction (HJ) DNA during genetic recombination and DNA repair, while the RuvA-RuvB complex plays an important role in the rescue of blocked DNA replication forks via replication fork reversal (RFR). RuvA specifically binds to HJ cruciform DNA, conferring on it an open structure. The RuvB hexamer acts as an ATP-dependent pump, pulling dsDNA into and through the RuvAB complex. RuvB forms 2 homohexamers on either side of HJ DNA bound by 1 or 2 RuvA tetramers; 4 subunits per hexamer contact DNA at a time. Coordinated motions by a converter formed by DNA-disengaged RuvB subunits stimulates ATP hydrolysis and nucleotide exchange. Immobilization of the converter enables RuvB to convert the ATP-contained energy into a lever motion, pulling 2 nucleotides of DNA out of the RuvA tetramer per ATP hydrolyzed, thus driving DNA branch migration. The RuvB motors rotate together with the DNA substrate, which together with the progressing nucleotide cycle form the mechanistic basis for DNA recombination by continuous HJ branch migration. Branch migration allows RuvC to scan DNA until it finds its consensus sequence, where it cleaves and resolves cruciform DNA. The protein is Holliday junction branch migration complex subunit RuvB of Polaromonas naphthalenivorans (strain CJ2).